A 519-amino-acid chain; its full sequence is Exodeoxyribonuclease 7 large subunit (519 aa).

The tract at residues 500–519 (VGRGKTRKPKEEPPAQGSLL) is disordered.

It belongs to the XseA family. Heterooligomer composed of large and small subunits.

The protein resides in the cytoplasm. The catalysed reaction is Exonucleolytic cleavage in either 5'- to 3'- or 3'- to 5'-direction to yield nucleoside 5'-phosphates.. Bidirectionally degrades single-stranded DNA into large acid-insoluble oligonucleotides, which are then degraded further into small acid-soluble oligonucleotides. The protein is Exodeoxyribonuclease 7 large subunit of Cereibacter sphaeroides (strain ATCC 17023 / DSM 158 / JCM 6121 / CCUG 31486 / LMG 2827 / NBRC 12203 / NCIMB 8253 / ATH 2.4.1.) (Rhodobacter sphaeroides).